Consider the following 127-residue polypeptide: Small ribosomal subunit protein uS13 (127 aa).

The tract at residues 92-127 (HRMGLPVRGQRTRTNARTRRGVRRTVAGKKKASAKK) is disordered. Over residues 101-127 (QRTRTNARTRRGVRRTVAGKKKASAKK) the composition is skewed to basic residues.

Belongs to the universal ribosomal protein uS13 family. As to quaternary structure, part of the 30S ribosomal subunit. Forms a loose heterodimer with protein S19. Forms two bridges to the 50S subunit in the 70S ribosome.

Its function is as follows. Located at the top of the head of the 30S subunit, it contacts several helices of the 16S rRNA. In the 70S ribosome it contacts the 23S rRNA (bridge B1a) and protein L5 of the 50S subunit (bridge B1b), connecting the 2 subunits; these bridges are implicated in subunit movement. Contacts the tRNAs in the A and P-sites. In Trichodesmium erythraeum (strain IMS101), this protein is Small ribosomal subunit protein uS13.